A 323-amino-acid polypeptide reads, in one-letter code: Aldo-keto reductase family 1 member C3 (323 aa).

Residues 20 to 24 and Asp-50 each bind NADP(+); that span reads GFGTY. The active-site Proton donor is the Tyr-55. Position 117 (His-117) interacts with substrate. NADP(+)-binding positions include 166–167, Gln-190, 216–221, and 270–280; these read SN, YSALGS, and KSYNEQRIREN.

The protein belongs to the aldo/keto reductase family.

Its subcellular location is the cytoplasm. The enzyme catalyses a 3alpha-hydroxysteroid + NADP(+) = a 3-oxosteroid + NADPH + H(+). It carries out the reaction a 3alpha-hydroxysteroid + NAD(+) = a 3-oxosteroid + NADH + H(+). It catalyses the reaction prostaglandin F2alpha + NADP(+) = prostaglandin D2 + NADPH + H(+). The catalysed reaction is testosterone + NAD(+) = androst-4-ene-3,17-dione + NADH + H(+). The enzyme catalyses testosterone + NADP(+) = androst-4-ene-3,17-dione + NADPH + H(+). It carries out the reaction prostaglandin F2alpha + NADP(+) = prostaglandin H2 + NADPH + H(+). It catalyses the reaction prostaglandin D2 + NADPH + H(+) = 11beta-prostaglandin F2 + NADP(+). The catalysed reaction is prostaglandin D2-ethanolamide + NADPH + H(+) = 11beta-prostaglandin F2-ethanolamide + NADP(+). The enzyme catalyses 17beta-estradiol + NADP(+) = estrone + NADPH + H(+). It carries out the reaction 17beta-estradiol + NAD(+) = estrone + NADH + H(+). It catalyses the reaction (20S)-hydroxypregn-4-en-3-one + NADP(+) = progesterone + NADPH + H(+). The catalysed reaction is (20S)-hydroxypregn-4-en-3-one + NAD(+) = progesterone + NADH + H(+). The enzyme catalyses 5alpha-androstane-3alpha,17beta-diol + NADP(+) = 17beta-hydroxy-5alpha-androstan-3-one + NADPH + H(+). It carries out the reaction 5alpha-androstane-3alpha,17beta-diol + NAD(+) = 17beta-hydroxy-5alpha-androstan-3-one + NADH + H(+). It catalyses the reaction androsterone + NADPH + H(+) = 5alpha-androstane-3alpha,17beta-diol + NADP(+). The catalysed reaction is 5alpha-androstane-3alpha,17beta-diol + NAD(+) = androsterone + NADH + H(+). The enzyme catalyses 5alpha-androstane-3beta,17beta-diol + NADP(+) = 17beta-hydroxy-5alpha-androstan-3-one + NADPH + H(+). It carries out the reaction 9-cis-retinol + NADP(+) = 9-cis-retinal + NADPH + H(+). Its pathway is steroid metabolism. Cytosolic aldo-keto reductase that catalyzes the NADH and NADPH-dependent reduction of ketosteroids to hydroxysteroids. Acts as a NAD(P)(H)-dependent 3-, 17- and 20-ketosteroid reductase on the steroid nucleus and side chain and regulates the metabolism of androgens, estrogens and progesterone. Displays the ability to catalyze both oxidation and reduction in vitro, but most probably acts as a reductase in vivo since the oxidase activity measured in vitro is inhibited by physiological concentration of NADPH. Acts preferentially as a 17-ketosteroid reductase and has the highest catalytic efficiency of the AKR1C enzyme for the reduction of delta4-androstenedione to form testosterone. Reduces prostaglandin (PG) D2 to 11beta-prostaglandin F2, progesterone to 20alpha-hydroxyprogesterone and estrone to 17beta-estradiol. Catalyzes the transformation of the potent androgen dihydrotestosterone (DHT) into the less active form, 5-alpha-androstan-3-alpha,17-beta-diol (3-alpha-diol). Also displays retinaldehyde reductase activity toward 9-cis-retinal. The protein is Aldo-keto reductase family 1 member C3 (AKR1C3) of Pongo abelii (Sumatran orangutan).